Reading from the N-terminus, the 322-residue chain is Malate dehydrogenase 1 (322 aa).

NAD(+)-binding positions include 10-15 (GSGQIG) and Asp-34. Substrate contacts are provided by Arg-83 and Arg-89. NAD(+) is bound by residues Asn-96 and 119–121 (ITN). Substrate is bound by residues Asn-121 and Arg-152. The Proton acceptor role is filled by His-176.

This sequence belongs to the LDH/MDH superfamily. MDH type 3 family.

It catalyses the reaction (S)-malate + NAD(+) = oxaloacetate + NADH + H(+). Functionally, catalyzes the reversible oxidation of malate to oxaloacetate. The sequence is that of Malate dehydrogenase 1 from Rhodopseudomonas palustris (strain BisB18).